A 325-amino-acid chain; its full sequence is Malate dehydrogenase (325 aa).

7-13 is an NADP(+) binding site; that stretch reads GSTGRVG. 2 residues coordinate substrate: Arg84 and Arg90. NADP(+)-binding positions include Asn97 and 120–122; that span reads VTN. Residues Asn122 and Arg153 each coordinate substrate. Catalysis depends on His177, which acts as the Proton acceptor.

It belongs to the LDH/MDH superfamily.

It carries out the reaction (S)-malate + NADP(+) = oxaloacetate + NADPH + H(+). The catalysed reaction is (S)-malate + NAD(+) = oxaloacetate + NADH + H(+). In terms of biological role, catalyzes the reversible oxidation of malate to oxaloacetate. Can use NAD(+) and NADP(+) with similar specific activity. In Methanothermobacter marburgensis (strain ATCC BAA-927 / DSM 2133 / JCM 14651 / NBRC 100331 / OCM 82 / Marburg) (Methanobacterium thermoautotrophicum), this protein is Malate dehydrogenase.